The primary structure comprises 114 residues: Probable 4-amino-4-deoxy-L-arabinose-phosphoundecaprenol flippase subunit ArnE (114 aa).

Transmembrane regions (helical) follow at residues 41–61, 64–84, and 91–111; these read MWLWLAIACLGLGLLVWLLVL, MDVGIAYPMLGLNFVLITLVG, and PVDPQHWLGIALILVGVFQLG.

This sequence belongs to the ArnE family. In terms of assembly, heterodimer of ArnE and ArnF.

Its subcellular location is the cell inner membrane. The protein operates within bacterial outer membrane biogenesis; lipopolysaccharide biosynthesis. Its function is as follows. Translocates 4-amino-4-deoxy-L-arabinose-phosphoundecaprenol (alpha-L-Ara4N-phosphoundecaprenol) from the cytoplasmic to the periplasmic side of the inner membrane. The protein is Probable 4-amino-4-deoxy-L-arabinose-phosphoundecaprenol flippase subunit ArnE of Pseudomonas savastanoi pv. phaseolicola (strain 1448A / Race 6) (Pseudomonas syringae pv. phaseolicola (strain 1448A / Race 6)).